Here is a 370-residue protein sequence, read N- to C-terminus: MAAPARTPRSRILGCSSMLRFLRNLVGSKGGSKSTNKPLTRSQPSSSWEQDVVSPMMGHQGGRGRKEPRAKVHSAASSNGKREPPPRVLSAAPSNPRHDAFELGTGDSGSQTLTSKDVPKLRAQGVEVTSVPLRGTWEVLEQLPEKKGEEEEPVGEVSGASDREHFGQALETEQGCLQWVPGPLALTPGAFIKEEEDEHCPIEFGDLKPSSCKVGSTPWNYLLGLYKQLQKSAMAKAQRPAAPQLALKDGLPHEEKGEREEAVDESCPKWCAPRASSDESCPKWCAPRASTYQSPLQKKFRSTDTVGFVESELKKILSVQREARLWKVGNPEGRELLTQPDITLEEAGMVDGQHLLLEEMDEMGNWPPPD.

2 disordered regions span residues 26 to 114 (VGSK…QTLT) and 240 to 263 (PAAP…EEAV). The segment covering 31-49 (GSKSTNKPLTRSQPSSSWE) has biased composition (polar residues). Residues 225–370 (LYKQLQKSAM…DEMGNWPPPD (146 aa)) are required for induction of mitochondrial fragmentation. A compositionally biased stretch (basic and acidic residues) spans 250–260 (GLPHEEKGERE). Residues 298 to 370 (KKFRSTDTVG…DEMGNWPPPD (73 aa)) form an interaction with GGN region.

As to quaternary structure, interacts with CCDC159. Interacts with isoform 1 and isoform 2 of GGN. Testis-specific. In the testis, expressed only in germ cells and not in somatic cells. Expression starts in late primary spermatocytes in stage X-XII tubules and gradually increases towards step 1-3 spermatids in stage I-III tubules. Expression then declines continuously and disappears after step 7 spermatids in stage VII tubules (at protein level).

It is found in the cytoplasm. Its subcellular location is the membrane. It localises to the golgi apparatus. The protein localises to the mitochondrion intermembrane space. Functionally, induces mitochondrial fragmentation, possibly by promoting DNM1L-dependent fission and may play a role in mitochondrial morphogenesis during spermatogenesis. The protein is Gametogenetin-binding protein 1 (Ggnbp1) of Mus musculus (Mouse).